Consider the following 774-residue polypeptide: E3 ubiquitin-protein ligase RFWD3 (774 aa).

A phosphoserine; by ATM and ATR mark is found at Ser-46 and Ser-63. Disordered regions lie at residues 95–116, 139–225, and 257–280; these read NPRT…PASS, PSSS…AEYG, and GGKT…ASMD. Residues 106–116 are compositionally biased toward polar residues; it reads SDGNHTIPASS. Basic residues predominate over residues 150–162; sequence RTRRRVSASRRAR. Low complexity predominate over residues 211-221; the sequence is SSSSDSDSDSS. The RING-type; degenerate zinc-finger motif lies at 287-331; sequence CTICLEQWTNAGDHRLSALRCGHLFGYRCISTWLKGQVRKCPQCN. Residues 361–413 adopt a coiled-coil conformation; it reads SLLKEQMLRKQAELESAQCRLQLQVLTDKCTRLQRRVQDLQKLTSHQSQNLQQ. WD repeat units lie at residues 495–537, 539–577, and 583–628; these read MHGK…QTYN, GRPV…SHVQ, and KARC…SHWP.

In terms of assembly, interacts with MDM2 and p53/TP53. Binds to the RPA complex via direct interaction with RPA2. Interacts with RAD51. In terms of processing, phosphorylated at Ser-46 and Ser-63 upon DNA damage by ATM or ATR. ATM phosphorylation occurs at early times upon DNA damage, while ATR is the major kinase at later times. Phosphorylation by ATM and ATR is required to stabilize p53/TP53. Part of the phosphorylation depends upon RPA2 presence.

The protein resides in the nucleus. The protein localises to the PML body. It is found in the cytoplasm. The catalysed reaction is S-ubiquitinyl-[E2 ubiquitin-conjugating enzyme]-L-cysteine + [acceptor protein]-L-lysine = [E2 ubiquitin-conjugating enzyme]-L-cysteine + N(6)-ubiquitinyl-[acceptor protein]-L-lysine.. Its pathway is protein modification; protein ubiquitination. E3 ubiquitin-protein ligase required for the repair of DNA interstrand cross-links (ICL) in response to DNA damage. Plays a key role in RPA-mediated DNA damage signaling and repair. Acts by mediating ubiquitination of the RPA complex (RPA1, RPA2 and RPA3 subunits) and RAD51 at stalled replication forks, leading to remove them from DNA damage sites and promote homologous recombination. Also mediates the ubiquitination of p53/TP53 in the late response to DNA damage, and acts as a positive regulator of p53/TP53 stability, thereby regulating the G1/S DNA damage checkpoint. May act by catalyzing the formation of short polyubiquitin chains on p53/TP53 that are not targeted to the proteasome. In response to ionizing radiation, interacts with MDM2 and enhances p53/TP53 ubiquitination, possibly by restricting MDM2 from extending polyubiquitin chains on ubiquitinated p53/TP53. Required to translesion DNA synthesis across DNA-protein cross-link adducts by catalyzing ubiquitination of proteins on single-stranded DNA (ssDNA). This Homo sapiens (Human) protein is E3 ubiquitin-protein ligase RFWD3.